A 344-amino-acid chain; its full sequence is tRNA N6-adenosine threonylcarbamoyltransferase (344 aa).

Fe cation is bound by residues His-113 and His-117. Substrate-binding positions include 135 to 139 (LVSGG), Asp-169, Gly-182, Asp-186, and Asn-278. Fe cation is bound at residue Asp-306. The tract at residues 325 to 344 (ESPISVGTDPSLSVETPQVF) is disordered. The segment covering 326 to 344 (SPISVGTDPSLSVETPQVF) has biased composition (polar residues).

The protein belongs to the KAE1 / TsaD family. Fe(2+) is required as a cofactor.

The protein resides in the cytoplasm. The catalysed reaction is L-threonylcarbamoyladenylate + adenosine(37) in tRNA = N(6)-L-threonylcarbamoyladenosine(37) in tRNA + AMP + H(+). Functionally, required for the formation of a threonylcarbamoyl group on adenosine at position 37 (t(6)A37) in tRNAs that read codons beginning with adenine. Is involved in the transfer of the threonylcarbamoyl moiety of threonylcarbamoyl-AMP (TC-AMP) to the N6 group of A37, together with TsaE and TsaB. TsaD likely plays a direct catalytic role in this reaction. The chain is tRNA N6-adenosine threonylcarbamoyltransferase from Corynebacterium glutamicum (strain ATCC 13032 / DSM 20300 / JCM 1318 / BCRC 11384 / CCUG 27702 / LMG 3730 / NBRC 12168 / NCIMB 10025 / NRRL B-2784 / 534).